A 117-amino-acid polypeptide reads, in one-letter code: Transcription elongation factor A protein-like 8 (117 aa).

Residues 1–81 are disordered; that stretch reads MQKSCDENEG…PEEVIRGVDE (81 aa). The span at 41–81 shows a compositional bias: basic and acidic residues; sequence NVREETDGSLRGEPAEPSPEPKEDTPARHLNPEEVIRGVDE. Residues 73–100 are a coiled coil; it reads EEVIRGVDELERLREEIRRVRNKFVLMH.

It belongs to the TFS-II family. TFA subfamily. Highly expressed in kidney. Moderately expressed in heart and lung. Low expression in brain and liver. Expression is up-regulated in nephrectomized kidney.

The protein localises to the nucleus. Its function is as follows. May be involved in transcriptional regulation. This chain is Transcription elongation factor A protein-like 8 (Tceal8), found in Rattus norvegicus (Rat).